The chain runs to 431 residues: 3-phosphoshikimate 1-carboxyvinyltransferase (431 aa).

3-phosphoshikimate is bound by residues Lys-26, Ser-27, and Arg-31. Phosphoenolpyruvate is bound at residue Lys-26. Positions 99 and 127 each coordinate phosphoenolpyruvate. The 3-phosphoshikimate site is built by Ser-170, Ser-171, Gln-172, Ser-199, Glu-314, and His-343. Gln-172 contacts phosphoenolpyruvate. Glu-314 functions as the Proton acceptor in the catalytic mechanism. Positions 347, 388, and 413 each coordinate phosphoenolpyruvate.

It belongs to the EPSP synthase family. In terms of assembly, monomer.

The protein localises to the cytoplasm. The catalysed reaction is 3-phosphoshikimate + phosphoenolpyruvate = 5-O-(1-carboxyvinyl)-3-phosphoshikimate + phosphate. It participates in metabolic intermediate biosynthesis; chorismate biosynthesis; chorismate from D-erythrose 4-phosphate and phosphoenolpyruvate: step 6/7. Its function is as follows. Catalyzes the transfer of the enolpyruvyl moiety of phosphoenolpyruvate (PEP) to the 5-hydroxyl of shikimate-3-phosphate (S3P) to produce enolpyruvyl shikimate-3-phosphate and inorganic phosphate. This is 3-phosphoshikimate 1-carboxyvinyltransferase from Mycobacterium ulcerans (strain Agy99).